A 439-amino-acid polypeptide reads, in one-letter code: Xylose isomerase (439 aa).

Residues histidine 103 and aspartate 106 contribute to the active site. Residues glutamate 234, glutamate 270, histidine 273, aspartate 298, aspartate 309, aspartate 311, and aspartate 341 each coordinate Mg(2+).

Belongs to the xylose isomerase family. As to quaternary structure, homotetramer. Mg(2+) is required as a cofactor.

The protein localises to the cytoplasm. It catalyses the reaction alpha-D-xylose = alpha-D-xylulofuranose. This Bacteroides fragilis (strain YCH46) protein is Xylose isomerase.